Here is a 224-residue protein sequence, read N- to C-terminus: MFLGLFQYTIDTVVKDVSKSVNLSLDAVQELELNVVPIRQASNVTGFLFTSVFVYFFALFKASSLRRNYIMLAARFAVVFLYCPLLYYCGALLDATIICCALIGRLCLVCFYSWRYKNALFIIFNTTTLSFLNGKAAYYDGKSIVILEGGDHYITFGNSFVAFVSNIDLYLAIRGRQEADLHLLRTVELLDGKKLYVFSQHQIVGITNAAFDSIQLDEYATISE.

Residues 34–124 enclose the CoV 3a-like viroporin TM domain; that stretch reads NVVPIRQASN…RYKNALFIIF (91 aa). The next 3 membrane-spanning stretches (helical) occupy residues 40 to 60, 69 to 88, and 95 to 111; these read QASN…FALF, YIML…LLYY, and ATII…LVCF. The CoV 3a-like viroporin CD domain occupies 128 to 203; that stretch reads TLSFLNGKAA…KLYVFSQHQI (76 aa).

The protein localises to the host membrane. This is Non-structural protein 3 from Sus scrofa (Pig).